The following is a 192-amino-acid chain: Large ribosomal subunit protein uL3 (192 aa).

It belongs to the universal ribosomal protein uL3 family. As to quaternary structure, part of the 50S ribosomal subunit. Forms a cluster with proteins L14 and L19.

One of the primary rRNA binding proteins, it binds directly near the 3'-end of the 23S rRNA, where it nucleates assembly of the 50S subunit. This chain is Large ribosomal subunit protein uL3 (rplC), found in Wolinella succinogenes (strain ATCC 29543 / DSM 1740 / CCUG 13145 / JCM 31913 / LMG 7466 / NCTC 11488 / FDC 602W) (Vibrio succinogenes).